Consider the following 338-residue polypeptide: Aspartate--ammonia ligase (338 aa).

It belongs to the class-II aminoacyl-tRNA synthetase family. AsnA subfamily.

Its subcellular location is the cytoplasm. It catalyses the reaction L-aspartate + NH4(+) + ATP = L-asparagine + AMP + diphosphate + H(+). Its pathway is amino-acid biosynthesis; L-asparagine biosynthesis; L-asparagine from L-aspartate (ammonia route): step 1/1. This Lactobacillus delbrueckii subsp. bulgaricus (strain ATCC BAA-365 / Lb-18) protein is Aspartate--ammonia ligase.